Consider the following 191-residue polypeptide: Probable chemoreceptor glutamine deamidase CheD (191 aa).

This sequence belongs to the CheD family.

The catalysed reaction is L-glutaminyl-[protein] + H2O = L-glutamyl-[protein] + NH4(+). In terms of biological role, probably deamidates glutamine residues to glutamate on methyl-accepting chemotaxis receptors (MCPs), playing an important role in chemotaxis. The protein is Probable chemoreceptor glutamine deamidase CheD of Hydrogenovibrio crunogenus (strain DSM 25203 / XCL-2) (Thiomicrospira crunogena).